Consider the following 130-residue polypeptide: Small ribosomal subunit protein uS8 (130 aa).

This sequence belongs to the universal ribosomal protein uS8 family. In terms of assembly, part of the 30S ribosomal subunit.

In terms of biological role, one of the primary rRNA binding proteins, it binds directly to 16S rRNA central domain where it helps coordinate assembly of the platform of the 30S subunit. In Natronomonas pharaonis (strain ATCC 35678 / DSM 2160 / CIP 103997 / JCM 8858 / NBRC 14720 / NCIMB 2260 / Gabara) (Halobacterium pharaonis), this protein is Small ribosomal subunit protein uS8.